We begin with the raw amino-acid sequence, 137 residues long: L-ectoine synthase (137 aa).

The tract at residues 118–137 (VHREDGSYAPADEADDQKPL) is disordered.

This sequence belongs to the ectoine synthase family.

The catalysed reaction is (2S)-4-acetamido-2-aminobutanoate = L-ectoine + H2O. The protein operates within amine and polyamine biosynthesis; ectoine biosynthesis; L-ectoine from L-aspartate 4-semialdehyde: step 3/3. Seems to require potassium ions for its activity and stability. Slightly inhibited by N-ethylmaleimide. Catalyzes the circularization of gamma-N-acetyl-alpha,gamma-diaminobutyric acid (ADABA) to ectoine (1,4,5,6-tetrahydro-2-methyl-4-pyrimidine carboxylic acid), which is an excellent osmoprotectant. Does not act on N-acetylated amino acids like N-alpha-acetyl-L-asparagine,N-alpha-acetyl-L-ornithine, N-alpha-acetyl-L-lysine and N-epsilon-acetyl-L-lysine. The polypeptide is L-ectoine synthase (ectC) (Halomonas elongata (strain ATCC 33173 / DSM 2581 / NBRC 15536 / NCIMB 2198 / 1H9)).